Here is a 430-residue protein sequence, read N- to C-terminus: Histidine--tRNA ligase (430 aa).

Belongs to the class-II aminoacyl-tRNA synthetase family. As to quaternary structure, homodimer.

The protein localises to the cytoplasm. It carries out the reaction tRNA(His) + L-histidine + ATP = L-histidyl-tRNA(His) + AMP + diphosphate + H(+). The protein is Histidine--tRNA ligase of Chlamydia abortus (strain DSM 27085 / S26/3) (Chlamydophila abortus).